The chain runs to 513 residues: ATP synthase subunit alpha (513 aa).

169 to 176 (GDRQTGKT) provides a ligand contact to ATP.

Belongs to the ATPase alpha/beta chains family. As to quaternary structure, F-type ATPases have 2 components, CF(1) - the catalytic core - and CF(0) - the membrane proton channel. CF(1) has five subunits: alpha(3), beta(3), gamma(1), delta(1), epsilon(1). CF(0) has three main subunits: a(1), b(2) and c(9-12). The alpha and beta chains form an alternating ring which encloses part of the gamma chain. CF(1) is attached to CF(0) by a central stalk formed by the gamma and epsilon chains, while a peripheral stalk is formed by the delta and b chains.

It is found in the cell inner membrane. The enzyme catalyses ATP + H2O + 4 H(+)(in) = ADP + phosphate + 5 H(+)(out). Functionally, produces ATP from ADP in the presence of a proton gradient across the membrane. The alpha chain is a regulatory subunit. The sequence is that of ATP synthase subunit alpha from Shewanella sp. (strain MR-4).